A 446-amino-acid chain; its full sequence is Maltoporin (446 aa).

The first 25 residues, 1–25 (MMITLRKLPLAVAVAAGVMSAQAMA), serve as a signal peptide directing secretion.

It belongs to the porin LamB (TC 1.B.3) family. In terms of assembly, homotrimer formed of three 18-stranded antiparallel beta-barrels, containing three independent channels.

Its subcellular location is the cell outer membrane. The catalysed reaction is beta-maltose(in) = beta-maltose(out). Its function is as follows. Involved in the transport of maltose and maltodextrins. The protein is Maltoporin of Escherichia coli (strain K12 / MC4100 / BW2952).